A 323-amino-acid polypeptide reads, in one-letter code: Caspase-1 (323 aa).

Positions 1 to 33 (MTDECVTRNYGVGIRSPNGSENRGSFIMADNTD) are excised as a propeptide. Residues H154 and C196 contribute to the active site. Positions 203-215 (GGITLEKGVTETD) are excised as a propeptide.

It belongs to the peptidase C14A family. Heterotetramer that consists of two anti-parallel arranged heterodimers, each one formed by a 22 kDa (p22) and a 13 kDa (p13) subunit.

Involved in the activation cascade of caspases responsible for apoptosis execution. Proteolytically cleaves poly(ADP-ribose) polymerase (PARP). Loss of zygotic DCP-1 function causes larval lethality and melanotic tumors. This is Caspase-1 (Dcp-1) from Drosophila melanogaster (Fruit fly).